The chain runs to 161 residues: MAQESWKNESEETVHTPEAPILCVNNCGFFGSSMTNNMCSKCYRDFVKVTTMAAPVVEKKAFTPASSSKTPLEPAKPDEVPAAAVEDKQAAQEPPKPPSNRCLSCRKKVGLTGFQCRCGGTFCSTHRYTEAHDCTFDYKKAGRDQIAKQNPVVIAEKINKI.

An A20-type zinc finger spans residues 17–51 (PEAPILCVNNCGFFGSSMTNNMCSKCYRDFVKVTT). 4 residues coordinate Zn(2+): cysteine 23, cysteine 27, cysteine 39, and cysteine 42. The interval 62-99 (FTPASSSKTPLEPAKPDEVPAAAVEDKQAAQEPPKPPS) is disordered. Over residues 75 to 90 (AKPDEVPAAAVEDKQA) the composition is skewed to basic and acidic residues. The AN1-type zinc-finger motif lies at 96 to 142 (KPPSNRCLSCRKKVGLTGFQCRCGGTFCSTHRYTEAHDCTFDYKKAG). Zn(2+) contacts are provided by cysteine 102, cysteine 105, cysteine 116, cysteine 118, cysteine 123, histidine 126, histidine 132, and cysteine 134.

Its function is as follows. May be involved in environmental stress response. The protein is Zinc finger A20 and AN1 domain-containing stress-associated protein 9 (SAP9) of Oryza sativa subsp. japonica (Rice).